A 340-amino-acid chain; its full sequence is Phenylalanine--tRNA ligase alpha subunit (340 aa).

Residue Glu255 coordinates Mg(2+).

The protein belongs to the class-II aminoacyl-tRNA synthetase family. Phe-tRNA synthetase alpha subunit type 1 subfamily. Tetramer of two alpha and two beta subunits. Mg(2+) serves as cofactor.

The protein resides in the cytoplasm. It catalyses the reaction tRNA(Phe) + L-phenylalanine + ATP = L-phenylalanyl-tRNA(Phe) + AMP + diphosphate + H(+). This is Phenylalanine--tRNA ligase alpha subunit from Syntrophomonas wolfei subsp. wolfei (strain DSM 2245B / Goettingen).